A 191-amino-acid chain; its full sequence is Protein NUCLEAR FUSION DEFECTIVE 2 (191 aa).

A signal peptide spans 1 to 29 (MATLRFTLLLLVFVVGIFFSFSSVSHVRA). Positions 48–167 (LAKLQTQIGY…IFGAIAIDAG (120 aa)) constitute an RNase III domain.

In terms of biological role, required for karyogamy during female gametophyte development, when the two polar nuclei fuse to form the diploid central cell nucleus. The sequence is that of Protein NUCLEAR FUSION DEFECTIVE 2 from Arabidopsis thaliana (Mouse-ear cress).